Reading from the N-terminus, the 994-residue chain is Cation-chloride cotransporter 2 (994 aa).

The interval 1 to 28 (MERGGFGGAGRHDEEAPAMRPAPQQRYR) is disordered. Topologically, residues 1 to 139 (MERGGFGGAG…GHPKETETKL (139 aa)) are cytoplasmic. A helical transmembrane segment spans residues 140-160 (DTMMGVFVPCLQNILGIIYYI). Over 161 to 174 (RFTWIVGMGGVWQS) the chain is Extracellular. The chain crosses the membrane as a helical span at residues 175–195 (LVLVAFCGSCTFLTTISLSAI). Residues 196-221 (ATNGAMKGGGPYYLIGRALGPEVGVS) lie on the Cytoplasmic side of the membrane. The helical transmembrane segment at 222–242 (IGLCFFLGNAVAGAMYVLGAV) threads the bilayer. The Extracellular portion of the chain corresponds to 243 to 287 (ETFLDAVPSAEFFQESVTVVTNTFVNGTAAGNATTISTPNLHDLQ). Asn268 and Asn274 each carry an N-linked (GlcNAc...) asparagine glycan. Residues 288–308 (VYGIIVTILLCFIVFGGVKII) form a helical membrane-spanning segment. The Cytoplasmic segment spans residues 309-311 (NKV). A helical membrane pass occupies residues 312 to 332 (APAFLIPVLFSILCIYIGVFI). Residues 333–372 (APRPNASKWITGLSITTLKDNWSSDYQRTNNAGVPDPNGS) lie on the Extracellular side of the membrane. 3 N-linked (GlcNAc...) asparagine glycosylation sites follow: Asn337, Asn353, and Asn370. Residues 373 to 393 (IYWDFNALLGLYFPAVTGIMA) traverse the membrane as a helical segment. At 394 to 412 (GSNRSASLKDTQRSIPIGT) the chain is on the cytoplasmic side. Residues 413–433 (LHATISTTMMYLLSVFLFGAL) traverse the membrane as a helical segment. Over 434–448 (STREGLLTDRLLCAA) the chain is Extracellular. A helical transmembrane segment spans residues 449 to 469 (VAWPSPAVVYAGIILSTLGAA). At 470 to 505 (LQSLTGAPRLLAAIANDDILPVLNYFKAYEGSEPHV) the chain is on the cytoplasmic side. The helical transmembrane segment at 506–526 (ATLFTSFICISCVIIGNLDVI) threads the bilayer. Residues 527–529 (TPT) are Extracellular-facing. The chain crosses the membrane as a helical span at residues 530–552 (ITMFFLLCYAGVNLSCFLLDLLD). Residues 553–558 (APSWRP) lie on the Cytoplasmic side of the membrane. The chain crosses the membrane as a helical span at residues 559–579 (RWKLHHWSLSLIGALLCIVIM). Residues 580 to 585 (FMISWT) lie on the Extracellular side of the membrane. Residues 586 to 606 (FTVVSLALASLIYYYVSLKGK) traverse the membrane as a helical segment. The Cytoplasmic segment spans residues 607 to 994 (AGDWGDGFKS…YRRDVVTLFT (388 aa)).

It belongs to the SLC12A transporter family.

It is found in the membrane. Its function is as follows. Probable cation/chloride cotransporter. The chain is Cation-chloride cotransporter 2 (CCC2) from Oryza sativa subsp. japonica (Rice).